The chain runs to 193 residues: Urease accessory protein UreE (193 aa).

The disordered stretch occupies residues 138–193 (RGAYHSHGAHSHDQGHAAHDHGNEHKHDHGHDHVHGPGCDHDHDHDHGHHHDHKHD). Residues 147–193 (HSHDQGHAAHDHGNEHKHDHGHDHVHGPGCDHDHDHDHGHHHDHKHD) show a composition bias toward basic and acidic residues.

This sequence belongs to the UreE family.

It localises to the cytoplasm. Its function is as follows. Involved in urease metallocenter assembly. Binds nickel. Probably functions as a nickel donor during metallocenter assembly. In Rhizobium leguminosarum bv. trifolii (strain WSM2304), this protein is Urease accessory protein UreE.